The chain runs to 297 residues: 4-hydroxy-tetrahydrodipicolinate synthase (297 aa).

Residue Thr-45 coordinates pyruvate. Catalysis depends on Tyr-133, which acts as the Proton donor/acceptor. Lys-161 functions as the Schiff-base intermediate with substrate in the catalytic mechanism. A pyruvate-binding site is contributed by Ile-203.

Belongs to the DapA family. Homotetramer; dimer of dimers.

The protein localises to the cytoplasm. It catalyses the reaction L-aspartate 4-semialdehyde + pyruvate = (2S,4S)-4-hydroxy-2,3,4,5-tetrahydrodipicolinate + H2O + H(+). Its pathway is amino-acid biosynthesis; L-lysine biosynthesis via DAP pathway; (S)-tetrahydrodipicolinate from L-aspartate: step 3/4. Catalyzes the condensation of (S)-aspartate-beta-semialdehyde [(S)-ASA] and pyruvate to 4-hydroxy-tetrahydrodipicolinate (HTPA). In Buchnera aphidicola subsp. Cinara cedri (strain Cc), this protein is 4-hydroxy-tetrahydrodipicolinate synthase.